A 191-amino-acid polypeptide reads, in one-letter code: Programmed cell death protein 6 (191 aa).

Ala-2 carries the post-translational modification N-acetylalanine. 5 consecutive EF-hand domains span residues 23–58 (PDQSFLWNVFQRVDKDRSGVISDNELQQALSNGTWT), 59–89 (PFNPVTVRSIISMFDRENKAGVNFSEFTGVW), 90–125 (KYITDWQNVFRTYDRDNSGMIDKNELKQALSGFGYR), 126–161 (LSDQFHDILIRKFDRQGRGQIAFDDFIQGCIVLQRL), and 162–191 (TDIFRRYDTDQDGWIQVSYEQYLSMVFSIV). Asp-36, Asp-38, Ser-40, Val-42, and Glu-47 together coordinate Ca(2+). Ca(2+)-binding residues include Asp-103, Asp-105, Ser-107, Met-109, and Glu-114. Mg(2+)-binding residues include Asp-169, Asp-171, Asp-173, and Trp-175.

As to quaternary structure, homodimer and heterodimer; heterodimerizes (via the EF-hand 5) with PEF1. Isoform 1 and isoform 2 self-associate; probably forming homodimers. Interacts with CPNE4 (via VWFA domain). Interacts with PDCD6IP; the interaction is calcium-dependent. Interacts with RBM22. Interacts with PLSCR4. Interacts with ANXA7 and TSG101. Interacts with DAPK1. Interacts with SEC31A; the interaction is calcium-dependent and promotes monoubiquitination of SEC31A. Interacts with ANXA11 (via N-terminus); the interaction is calcium-dependent. Interacts with PLSCR3 (via N-terminus); the interaction is calcium-dependent. Interacts with MCOLN1; the interaction is calcium-dependent. Interacts with KDR; the interaction is calcium-dependent. Interacts with HEBP2; the interaction is calcium-dependent. Interacts with TFG. Isoform 1: Interacts with SHISA5, leading to stabilize it. Isoform 2: Does not interact with SHISA5. Isoform 2: Does not interact with PDCD6IP, TSG101, ANXA7 and ANXA11.

It localises to the endoplasmic reticulum membrane. It is found in the cytoplasmic vesicle. The protein resides in the COPII-coated vesicle membrane. The protein localises to the cytoplasm. Its subcellular location is the nucleus. It localises to the endosome. Calcium sensor that plays a key role in processes such as endoplasmic reticulum (ER)-Golgi vesicular transport, endosomal biogenesis or membrane repair. Acts as an adapter that bridges unrelated proteins or stabilizes weak protein-protein complexes in response to calcium: calcium-binding triggers exposure of apolar surface, promoting interaction with different sets of proteins thanks to 3 different hydrophobic pockets, leading to translocation to membranes. Involved in ER-Golgi transport by promoting the association between PDCD6IP and TSG101, thereby bridging together the ESCRT-III and ESCRT-I complexes. Together with PEF1, acts as a calcium-dependent adapter for the BCR(KLHL12) complex, a complex involved in ER-Golgi transport by regulating the size of COPII coats. In response to cytosolic calcium increase, the heterodimer formed with PEF1 interacts with, and bridges together the BCR(KLHL12) complex and SEC31 (SEC31A or SEC31B), promoting monoubiquitination of SEC31 and subsequent collagen export, which is required for neural crest specification. Involved in the regulation of the distribution and function of MCOLN1 in the endosomal pathway. Promotes localization and polymerization of TFG at endoplasmic reticulum exit site. Required for T-cell receptor-, Fas-, and glucocorticoid-induced apoptosis. May mediate Ca(2+)-regulated signals along the death pathway: interaction with DAPK1 can accelerate apoptotic cell death by increasing caspase-3 activity. Its role in apoptosis may however be indirect, as suggested by knockout experiments. May inhibit KDR/VEGFR2-dependent angiogenesis; the function involves inhibition of VEGF-induced phosphorylation of the Akt signaling pathway. Functionally, has a lower Ca(2+) affinity than isoform 1. The protein is Programmed cell death protein 6 (Pdcd6) of Mus musculus (Mouse).